A 1259-amino-acid chain; its full sequence is Trafficking protein particle complex subunit 10 (1259 aa).

Serine 708 bears the Phosphoserine mark. Residues leucine 1189–proline 1222 form a disordered region.

It belongs to the TRAPPC10 family. As to quaternary structure, specific component of the multisubunit TRAPP II complex, which includes at least TRAPPC1, TRAPPC2, TRAPPC3, TRAPPC4, TRAPPC5, TRAPPC6A/B, TRAPPC9, TRAPPC10 and TRAPPC14. TRAPPC9, TRAPPC10 and TRAPPC14 are specific subunits of the TRAPP II complex. Interacts with TRAPPC14. Expressed in all tissues examined.

Its subcellular location is the golgi apparatus. It localises to the cis-Golgi network. Its function is as follows. Specific subunit of the TRAPP (transport protein particle) II complex, a highly conserved vesicle tethering complex that functions in late Golgi trafficking as a membrane tether. In Homo sapiens (Human), this protein is Trafficking protein particle complex subunit 10 (TRAPPC10).